We begin with the raw amino-acid sequence, 1369 residues long: MVLHSHQLTYAGIAFALCLHHLISAIEVPLDSNIQSELPQPPTITKQSVKDYIVDPRDNIFIECEAKGNPVPTFSWTRNGKFFNVAKDPKVSMRRRSGTLVIDFHGGGRPDDYEGEYQCFARNDYGTALSSKIHLQVSRSPLWPKEKVDVIEVDEGAPLSLQCNPPPGLPPPVIFWMSSSMEPIHQDKRVSQGQNGDLYFSNVMLQDAQTDYSCNARFHFTHTIQQKNPYTLKVKTKKPHNETSLRNHTDMYSARGVTETTPSFMYPYGTSSSQMVLRGVDLLLECIASGVPAPDIMWYKKGGELPAGKTKLENFNKALRISNVSEEDSGEYFCLASNKMGSIRHTISVRVKAAPYWLDEPQNLILAPGEDGRLVCRANGNPKPSIQWLVNGEPIEGSPPNPSREVAGDTIVFRDTQIGSSAVYQCNASNEHGYLLANAFVSVLDVPPRILAPRNQLIKVIQYNRTRLDCPFFGSPIPTLRWFKNGQGNMLDGGNYKAHENGSLEMSMARKEDQGIYTCVATNILGKVEAQVRLEVKDPTRIVRGPEDQVVKRGSMPRLHCRVKHDPTLKLTVTWLKDDAPLYIGNRMKKEDDGLTIYGVAEKDQGDYTCVASTELDKDSAKAYLTVLAIPANRLRDLPKERPDRPRDLELSDLAERSVKLTWIPGDDNNSPITDYIVQFEEDRFQPGTWHNHSRYPGNVNSALLSLSPYVNYQFRVIAVNDVGSSLPSMPSERYQTSGARPEINPTGVQGAGTQKNNMEITWTPLNATQAYGPNLRYIVRWRRRDPRGSWYNETVKAPRHVVWNTPIYVPYEIKVQAENDFGRAPEPETYIGYSGEDYPKAAPTDVRIRVLNSTAIALTWTRVHLDTIQGQLKEYRAYFWRDSSLLKNLWVSKKRQYVSFPGDRNRGIVSRLFPYSNYKLEMVVTNGRGDGPRSEVKEFPTPEGVPSSPRYLRIRQPNLESINLEWDHPEHPNGVLTGYNLRYQASCLSSPVNGSKTGRTLVENFSPNQTRFTVQRTDPISRYRFFLRARTQVGDGEVIVEESPALLNEATPTPASTWLPPPTTELTPAATIATTTTTATPTTETPPTEIPTTAIPTTTTTTTTTAASTVASTTTTAERAAAATTKQELATNGSSIWDIRAWANSNWANITWSHNYSAGTDFVVKYITSNKTEKSIPVKAQTPSSVQLANLTPGMVYKLWVFPIWSSPSEHSYITFTTSSAYTKNHVDIATQGWFIGLMCAIALLVLILLIVCFIKRSRGGKYPVRDNKDEHLNPEDKNVEDGSFDYRSLESDEDNKPLPNSQTSLDGTIKQQESDDSLVDYGEGGEGQFNEDGSFIGQYTVKKDKEETEGNESSEATSPVNAIYSLA.

The signal sequence occupies residues 1-25 (MVLHSHQLTYAGIAFALCLHHLISA). Over 26-1235 (IEVPLDSNIQ…NHVDIATQGW (1210 aa)) the chain is Extracellular. 2 Ig-like C2-type domains span residues 42–138 (PTIT…LQVS) and 144–231 (PKEK…NPYT). Intrachain disulfides connect C64-C119 and C163-C214. N-linked (GlcNAc...) asparagine glycans are attached at residues N241, N247, and N323. 4 Ig-like C2-type domains span residues 262 to 350 (PSFM…ISVR), 355 to 442 (PYWL…AFVS), 448 to 535 (PRIL…VRLE), and 539 to 626 (PTRI…AYLT). 2 disulfide bridges follow: C286-C334 and C376-C426. 3 N-linked (GlcNAc...) asparagine glycosylation sites follow: N427, N464, and N501. 2 disulfide bridges follow: C470–C519 and C561–C610. Fibronectin type-III domains lie at 645–740 (RPRD…TSGA), 745–838 (NPTG…SGED), 843–945 (APTD…TPEG), and 949–1057 (SPRY…TPAS). N692 is a glycosylation site (N-linked (GlcNAc...) asparagine). Over residues 730–739 (MPSERYQTSG) the composition is skewed to polar residues. A disordered region spans residues 730–753 (MPSERYQTSGARPEINPTGVQGAG). N-linked (GlcNAc...) asparagine glycosylation is found at N767, N793, N853, N994, and N1009. A disordered region spans residues 1078–1097 (TTATPTTETPPTEIPTTAIP). N1133, N1150, N1156, and N1171 each carry an N-linked (GlcNAc...) asparagine glycan. One can recognise a Fibronectin type-III 5 domain in the interval 1133 to 1222 (NGSSIWDIRA…SYITFTTSSA (90 aa)). A helical membrane pass occupies residues 1236-1256 (FIGLMCAIALLVLILLIVCFI). Residues 1257-1369 (KRSRGGKYPV…SPVNAIYSLA (113 aa)) lie on the Cytoplasmic side of the membrane. Composition is skewed to basic and acidic residues over residues 1266–1282 (VRDNKDEHLNPEDKNVE) and 1289–1298 (RSLESDEDNK). Residues 1266-1369 (VRDNKDEHLN…SPVNAIYSLA (104 aa)) form a disordered region. Residues 1300–1313 (LPNSQTSLDGTIKQ) show a composition bias toward polar residues.

Belongs to the immunoglobulin superfamily. L1/neurofascin/NgCAM family. In terms of processing, N-glycosylated and O-glycosylated. May be proteolytically cleaved at Arg-636.

It is found in the cell membrane. Its function is as follows. Cell adhesion, ankyrin-binding protein which may be involved in neurite extension, axonal guidance, synaptogenesis, myelination and neuron-glial cell interactions. The polypeptide is Neurofascin (NFASC) (Gallus gallus (Chicken)).